The following is a 106-amino-acid chain: Immunoglobulin lambda constant 2 (106 aa).

Positions P7–A101 constitute an Ig-like domain. Residues C28 and C87 are joined by a disulfide bond.

As to quaternary structure, immunoglobulins are composed of two identical heavy chains and two identical light chains; disulfide-linked.

It is found in the secreted. The protein resides in the cell membrane. Functionally, constant region of immunoglobulin light chains. Immunoglobulins, also known as antibodies, are membrane-bound or secreted glycoproteins produced by B lymphocytes. In the recognition phase of humoral immunity, the membrane-bound immunoglobulins serve as receptors which, upon binding of a specific antigen, trigger the clonal expansion and differentiation of B lymphocytes into immunoglobulins-secreting plasma cells. Secreted immunoglobulins mediate the effector phase of humoral immunity, which results in the elimination of bound antigens. The antigen binding site is formed by the variable domain of one heavy chain, together with that of its associated light chain. Thus, each immunoglobulin has two antigen binding sites with remarkable affinity for a particular antigen. The variable domains are assembled by a process called V-(D)-J rearrangement and can then be subjected to somatic hypermutations which, after exposure to antigen and selection, allow affinity maturation for a particular antigen. This chain is Immunoglobulin lambda constant 2, found in Homo sapiens (Human).